A 421-amino-acid chain; its full sequence is Shaggy-related protein kinase kappa (421 aa).

Residues 1–10 (MASSGLGNGV) show a composition bias toward gly residues. A disordered region spans residues 1–60 (MASSGLGNGVGTSRSAKGLKSSSSSVDWLTRDLAETRIRDKVETDDERDSEPDIIDGAGA). A compositionally biased stretch (basic and acidic residues) spans 29–42 (LTRDLAETRIRDKV). Over residues 43 to 54 (ETDDERDSEPDI) the composition is skewed to acidic residues. The Protein kinase domain maps to 83–367 (YISEHVVGTG…ALEACIHPLF (285 aa)). Residues 89-97 (VGTGSFGMV) and Lys112 each bind ATP. The active-site Proton acceptor is the Asp208. The residue at position 243 (Tyr243) is a Phosphotyrosine.

Belongs to the protein kinase superfamily. CMGC Ser/Thr protein kinase family. GSK-3 subfamily. Autophosphorylated mainly on threonine and serine residues. As to expression, expressed exclusively in inflorescences.

It carries out the reaction L-seryl-[protein] + ATP = O-phospho-L-seryl-[protein] + ADP + H(+). The catalysed reaction is L-threonyl-[protein] + ATP = O-phospho-L-threonyl-[protein] + ADP + H(+). Its function is as follows. May mediate extracellular signals to regulate transcription in differentiating cells. This is Shaggy-related protein kinase kappa (ASK10) from Arabidopsis thaliana (Mouse-ear cress).